The chain runs to 1512 residues: MAAAAGNRASSSGFPGARATSPEAGGGGGALKASSAPAAAAGLLREAGSGGRERADWRRRQLRKVRSVELDQLPEQPLFLAASPPASSTSPSPEPADAAGSGTGFQPVAVPPPHGAASRGGAHLTESVAAPDSGASSPAAAEPGEKRAPAAEPSPAAAPAGREMENKETLKGLHKMDDRPEERMIREKLKATCMPAWKHEWLERRNRRGPVVVKPIPVKGDGSEMNHLAAESPGEVQASAASPASKGRRSPSPGNSPSGRTVKSESPGVRRKRVSPVPFQSGRITPPRRAPSPDGFSPYSPEETNRRVNKVMRARLYLLQQIGPNSFLIGGDSPDNKYRVFIGPQNCSCARGTFCIHLLFVMLRVFQLEPSDPMLWRKTLKNFEVESLFQKYHSRRSSRIKAPSRNTIQKFVSRMSNSHTLSSSSTSTSSSENSIKDEEEQMCPICLLGMLDEESLTVCEDGCRNKLHHHCMSIWAEECRRNREPLICPLCRSKWRSHDFYSHELSSPVDSPSSLRAAQQQTVQQQPLAGSRRNQESNFNLTHYGTQQIPPAYKDLAEPWIQVFGMELVGCLFSRNWNVREMALRRLSHDVSGALLLANGESTGNSGGSSGSSPSGGATSGSSQTSISGDVVEACCSVLSMVCADPVYKVYVAALKTLRAMLVYTPCHSLAERIKLQRLLQPVVDTILVKCADANSRTSQLSISTLLELCKGQAGELAVGREILKAGSIGIGGVDYVLNCILGNQTESNNWQELLGRLCLIDRLLLEFPAEFYPHIVSTDVSQAEPVEIRYKKLLSLLTFALQSIDNSHSMVGKLSRRIYLSSARMVTTVPHVFSKLLEMLSVSSSTHFTRMRRRLMAIADEVEIAEAIQLGVEDTLDGQQDSFLQASVPNNYLETTENSSPECTVHLEKTGKGLCATKLSASSEDISERLASISVGPSSSTTTTTTTTEQPKPMVQTKGRPHSQCLNSSPLSHHSQLMFPALSTPSSSTPSVPAGTATDVSKHRLQGFIPCRIPSASPQTQRKFSLQFHRNCPENKDSDKLSPVFTQSRPLPSSNIHRPKPSRPTPGNTSKQGDPSKNSMTLDLNSSSKCDDSFGCSSNSSNAVIPSDETVFTPVEEKCRLDVNTELNSSIEDLLEASMPSSDTTVTFKSEVAVLSPEKAENDDTYKDDVNHNQKCKEKMEAEEEEALAIAMAMSASQDALPIVPQLQVENGEDIIIIQQDTPETLPGHTKAKQPYREDTEWLKGQQIGLGAFSSCYQAQDVGTGTLMAVKQVTYVRNTSSEQEEVVEALREEIRMMSHLNHPNIIRMLGATCEKSNYNLFIEWMAGGSVAHLLSKYGAFKESVVINYTEQLLRGLSYLHENQIIHRDVKGANLLIDSTGQRLRIADFGAAARLASKGTGAGEFQGQLLGTIAFMAPEVLRGQQYGRSCDVWSVGCAIIEMACAKPPWNAEKHSNHLALIFKIASATTAPSIPSHLSPGLRDVALRCLELQPQDRPPSRELLKHPVFRTTW.

Residues 1 to 13 (MAAAAGNRASSSG) show a composition bias toward low complexity. Disordered regions lie at residues 1–37 (MAAA…SSAP), 67–181 (SVEL…DRPE), and 213–304 (VKPI…PEET). Ala-2 is modified (N-acetylalanine). 2 positions are modified to phosphoserine: Ser-21 and Ser-35. Composition is skewed to low complexity over residues 81 to 99 (AASP…ADAA), 129 to 142 (AAPD…AAAE), and 150 to 160 (AAEPSPAAAPA). A phosphoserine mark is found at Ser-137 and Ser-154. Basic and acidic residues predominate over residues 162–181 (REMENKETLKGLHKMDDRPE). Over residues 250–260 (SPSPGNSPSGR) the composition is skewed to low complexity. Residue Ser-275 is modified to Phosphoserine. Position 285 is a phosphothreonine (Thr-285). A phosphoserine mark is found at Ser-292, Ser-297, and Ser-300. The SWIM-type zinc finger occupies 338–366 (YRVFIGPQNCSCARGTFCIHLLFVMLRVF). Low complexity predominate over residues 416 to 433 (SNSHTLSSSSTSTSSSEN). The disordered stretch occupies residues 416–436 (SNSHTLSSSSTSTSSSENSIK). An RING-type zinc finger spans residues 443-492 (CPICLLGMLDEESLTVCEDGCRNKLHHHCMSIWAEECRRNREPLICPLCR). 2 positions are modified to phosphoserine: Ser-507 and Ser-531. 2 disordered regions span residues 511–532 (SPSS…AGSR) and 602–624 (STGN…GSSQ). A compositionally biased stretch (low complexity) spans 611–624 (GSSPSGGATSGSSQ). Ser-923 is modified (phosphoserine). A disordered region spans residues 933-972 (SISVGPSSSTTTTTTTTEQPKPMVQTKGRPHSQCLNSSPL). Residues 939–949 (SSSTTTTTTTT) show a composition bias toward low complexity. Ser-1018 is subject to Phosphoserine. The segment covering 1032–1041 (NCPENKDSDK) has biased composition (basic and acidic residues). Positions 1032–1087 (NCPENKDSDKLSPVFTQSRPLPSSNIHRPKPSRPTPGNTSKQGDPSKNSMTLDLNS) are disordered. Ser-1043 carries the post-translational modification Phosphoserine. 2 stretches are compositionally biased toward polar residues: residues 1045-1057 (VFTQ…SSNI) and 1066-1087 (TPGN…DLNS). Residues 1243-1508 (WLKGQQIGLG…SRELLKHPVF (266 aa)) enclose the Protein kinase domain. Residues 1249–1257 (IGLGAFSSC) and Lys-1272 contribute to the ATP site. Asp-1369 functions as the Proton acceptor in the catalytic mechanism. Phosphothreonine; by autocatalysis occurs at positions 1400 and 1412.

It belongs to the protein kinase superfamily. STE Ser/Thr protein kinase family. MAP kinase kinase kinase subfamily. Binds both upstream activators and downstream substrates in multimolecular complexes through its N-terminus. Oligomerizes after binding MAP2K4 or TRAF2. Interacts with AXIN1. Interacts (via the kinase catalytic domain) with STK38. Interacts with GRIPAP1. It depends on Mg(2+) as a cofactor. Post-translationally, autophosphorylated.

The enzyme catalyses L-seryl-[protein] + ATP = O-phospho-L-seryl-[protein] + ADP + H(+). It carries out the reaction L-threonyl-[protein] + ATP = O-phospho-L-threonyl-[protein] + ADP + H(+). The catalysed reaction is S-ubiquitinyl-[E2 ubiquitin-conjugating enzyme]-L-cysteine + [acceptor protein]-L-lysine = [E2 ubiquitin-conjugating enzyme]-L-cysteine + N(6)-ubiquitinyl-[acceptor protein]-L-lysine.. With respect to regulation, activated by autophosphorylation on Thr-1400 and Thr-1412 following oligomerization. In terms of biological role, component of a protein kinase signal transduction cascade. Activates the ERK and JNK kinase pathways by phosphorylation of MAP2K1 and MAP2K4. May phosphorylate the MAPK8/JNK1 kinase. Activates CHUK and IKBKB, the central protein kinases of the NF-kappa-B pathway. The chain is Mitogen-activated protein kinase kinase kinase 1 (MAP3K1) from Homo sapiens (Human).